A 2113-amino-acid chain; its full sequence is Ninein (2113 aa).

EF-hand domains are found at residues 8–43 (QHEA…LCLE) and 42–77 (LEDV…ILSR). S152 carries the post-translational modification Phosphoserine. EF-hand domains lie at 182-217 (WIEE…YGLQ) and 219-252 (VDGA…TGKS). 245–252 (GLFKTGKS) lines the GTP pocket. S269 carries the phosphoserine modification. A GTP-binding site is contributed by 300 to 304 (DGMGQ). The region spanning 317 to 352 (EGIENSQEILKALDFSLDGNINLTELTLALENELLV) is the EF-hand 5 domain. Positions 358-570 (HQAALASFKA…YQAQGRVLRL (213 aa)) form a coiled coil. GTP is bound at residue 420 to 423 (RKLD). The interval 578–599 (EELDGHSGGIEPDQGPGSEECN) is disordered. Coiled-coil stretches lie at residues 620–926 (RDLC…ESQH), 958–1008 (EQLA…STEI), 1175–1323 (EDTR…MEKV), and 1425–1806 (AALL…IDKD). The important for interaction with CEP170 stretch occupies residues 798-1495 (EMETECNRRV…QDLQITCGEM (698 aa)). Residues S1540 and S1826 each carry the phosphoserine modification. Coiled-coil stretches lie at residues 1852–1910 (VQNT…KEQS) and 1971–2093 (REQF…IASL). Disordered regions lie at residues 1899-1922 (KREC…MGSL) and 1988-2008 (SQHL…PQGN). Positions 1988-1999 (SQHLQEELENRT) are enriched in basic and acidic residues.

In terms of assembly, homooligomer. Interacts with GSK3B/GSK3-beta via its C-terminal domain. Interacts with C14ORF166, such interaction may prevent its phosphorylation by GSK3B. Interacts with AUNIP (via N-terminus). Identified in a complex with AUNIP and AURKA. Interacts with CCDC120. Interacts (via C-terminus) with CEP250. Interacts with CEP170. Interacts (via N-terminus) with the gamma-tubulin ring complex component TUBGCP3. Interacts with gamma-tubulin. Isoform 4 does not interact with CEP170 or CEP250. In terms of processing, phosphorylated by AURKA/Aurora kinase A and PKA kinases but not CK2 or AURKB/Aurora kinase B. In terms of tissue distribution, widely expressed. Highly expressed in spleen, bone marrow and skin. Weakly expressed in liver and small intestine. Expressed in brain.

Its subcellular location is the cytoplasm. The protein resides in the cytoskeleton. The protein localises to the microtubule organizing center. It localises to the centrosome. It is found in the centriole. Centrosomal protein required for the positioning and anchorage of the microtubule minus-end in epithelial cells. May also act as a centrosome maturation factor. May play a role in microtubule nucleation, by recruiting the gamma-tubulin ring complex to the centrosome. Overexpression does not perturb nucleation or elongation of microtubules but suppresses release of microtubules. Required for centriole organization and microtubule anchoring at the mother centriole. The sequence is that of Ninein from Mus musculus (Mouse).